A 1233-amino-acid polypeptide reads, in one-letter code: Hemocyanin A-type, units Ode to Odg (1233 aa).

Residues 1 to 4 (EGNE) are ODD. Residues 5 to 422 (YLVRKNVERL…KQDADIDIPL (418 aa)) form an ODE region. A Cu cation-binding site is contributed by histidine 45. The cysteines at positions 51 and 62 are disulfide-linked. Residues 63 to 65 (CLH) constitute a cross-link (2'-(S-cysteinyl)-histidine (Cys-His)). Residues histidine 65, histidine 74, histidine 186, histidine 190, and histidine 217 each contribute to the Cu cation site. Intrachain disulfides connect cysteine 176–cysteine 243 and cysteine 334–cysteine 340. Asparagine 392 carries N-linked (GlcNAc...) asparagine glycosylation. Residues 423–839 (NHIRRNVESL…KEIEKEAVRG (417 aa)) are ODF. Histidine 463 lines the Cu cation pocket. An intrachain disulfide couples cysteine 468 to cysteine 478. Positions 479–481 (CLH) form a cross-link, 2'-(S-cysteinyl)-histidine (Cys-His). Residues histidine 481 and histidine 490 each contribute to the Cu cation site. N-linked (GlcNAc...) asparagine glycosylation occurs at asparagine 538. 2 disulfides stabilise this stretch: cysteine 589-cysteine 656 and cysteine 743-cysteine 748. Cu cation contacts are provided by histidine 599, histidine 603, and histidine 630. The tract at residues 840 to 1233 (TIIRKNVNSL…VFLAPAKTTH (394 aa)) is ODG. Histidine 880 contacts Cu cation. An intrachain disulfide couples cysteine 886 to cysteine 896. N-linked (GlcNAc...) asparagine glycosylation is present at asparagine 890. The 2'-(S-cysteinyl)-histidine (Cys-His) cross-link spans 897–899 (CQH). Residues histidine 899, histidine 908, histidine 1008, histidine 1012, and histidine 1039 each contribute to the Cu cation site. 2 cysteine pairs are disulfide-bonded: cysteine 998–cysteine 1065 and cysteine 1152–cysteine 1158.

This sequence belongs to the tyrosinase family. Hemocyanin subfamily. Decamers of large identical subunits (350 kDa), each containing 7 globular oxygen-binding domains: ODA, ODB, ODC, ODD, ODE, ODF, and ODG. It depends on Cu(2+) as a cofactor.

Functionally, hemocyanins are copper-containing oxygen carriers occurring freely dissolved in the hemolymph of many mollusks and arthropods. The protein is Hemocyanin A-type, units Ode to Odg of Enteroctopus dofleini (North Pacific giant octopus).